The sequence spans 243 residues: Ribosomal RNA small subunit methyltransferase G (243 aa).

S-adenosyl-L-methionine is bound by residues Gly-79, Phe-84, 130–131 (AE), and Arg-150. The tract at residues 222–243 (KPTPNKYPRKPGIPNKQPLGGA) is disordered.

Belongs to the methyltransferase superfamily. RNA methyltransferase RsmG family.

Its subcellular location is the cytoplasm. In terms of biological role, specifically methylates the N7 position of a guanine in 16S rRNA. This chain is Ribosomal RNA small subunit methyltransferase G, found in Lacticaseibacillus paracasei (strain ATCC 334 / BCRC 17002 / CCUG 31169 / CIP 107868 / KCTC 3260 / NRRL B-441) (Lactobacillus paracasei).